The primary structure comprises 188 residues: Protein-L-isoaspartate O-methyltransferase (188 aa).

Residue Ser33 is part of the active site.

This sequence belongs to the methyltransferase superfamily. L-isoaspartyl/D-aspartyl protein methyltransferase family.

It localises to the cytoplasm. The catalysed reaction is [protein]-L-isoaspartate + S-adenosyl-L-methionine = [protein]-L-isoaspartate alpha-methyl ester + S-adenosyl-L-homocysteine. Catalyzes the methyl esterification of L-isoaspartyl residues in peptides and proteins that result from spontaneous decomposition of normal L-aspartyl and L-asparaginyl residues. It plays a role in the repair and/or degradation of damaged proteins. The protein is Protein-L-isoaspartate O-methyltransferase of Methanocella arvoryzae (strain DSM 22066 / NBRC 105507 / MRE50).